The sequence spans 360 residues: MKKIILVAGGTGGHFFPAVALGEELIKRGYEVHFITDLRCQKYINQNMGLIFHILDLKRSDNIFLFLPNLSIAILKAIKLLYNIRSSVIIGFGGYPVIAPMFAAIFLRVPIIIYEQNSYLGKVNKFFASFAKKIAISYEDVKNLPEFVKSKIVVTGGIVRENIRNVCHSRESGNDIKRSKDNIFTVFIFGGSQGAKLFSELIPASIQILMQKQPNLKLNIIQQAALDDQVKIKDIYSKLNINYEFAEFFDNMALKYKEADLVISRAGASTIEELTYIGLPAIFIPLPSAADNHQYYNAKLLADKKAGWCLEQNSISAEELADKILDLINNPKILEDTSQNLLKRRKEGHVLLSDLIERVI.

UDP-N-acetyl-alpha-D-glucosamine is bound by residues Thr11 to Gly13, Asn117, Arg160, Ser192, and Gln294.

This sequence belongs to the glycosyltransferase 28 family. MurG subfamily.

It is found in the cell inner membrane. The enzyme catalyses di-trans,octa-cis-undecaprenyl diphospho-N-acetyl-alpha-D-muramoyl-L-alanyl-D-glutamyl-meso-2,6-diaminopimeloyl-D-alanyl-D-alanine + UDP-N-acetyl-alpha-D-glucosamine = di-trans,octa-cis-undecaprenyl diphospho-[N-acetyl-alpha-D-glucosaminyl-(1-&gt;4)]-N-acetyl-alpha-D-muramoyl-L-alanyl-D-glutamyl-meso-2,6-diaminopimeloyl-D-alanyl-D-alanine + UDP + H(+). It participates in cell wall biogenesis; peptidoglycan biosynthesis. In terms of biological role, cell wall formation. Catalyzes the transfer of a GlcNAc subunit on undecaprenyl-pyrophosphoryl-MurNAc-pentapeptide (lipid intermediate I) to form undecaprenyl-pyrophosphoryl-MurNAc-(pentapeptide)GlcNAc (lipid intermediate II). This chain is UDP-N-acetylglucosamine--N-acetylmuramyl-(pentapeptide) pyrophosphoryl-undecaprenol N-acetylglucosamine transferase, found in Rickettsia felis (strain ATCC VR-1525 / URRWXCal2) (Rickettsia azadi).